The chain runs to 353 residues: GTPase Obg (353 aa).

In terms of domain architecture, Obg spans 1–159 (MKFLDEAKVY…RWIWLRLKLI (159 aa)). Residues 160–327 (ADAGLVGLPN…VLRALVAVIG (168 aa)) enclose the OBG-type G domain. GTP contacts are provided by residues 166 to 173 (GLPNAGKS), 191 to 195 (FTTLH), 212 to 215 (DIPG), 279 to 282 (NKID), and 308 to 310 (SGV). Residues Ser-173 and Thr-193 each contribute to the Mg(2+) site.

It belongs to the TRAFAC class OBG-HflX-like GTPase superfamily. OBG GTPase family. In terms of assembly, monomer. Mg(2+) serves as cofactor.

The protein resides in the cytoplasm. An essential GTPase which binds GTP, GDP and possibly (p)ppGpp with moderate affinity, with high nucleotide exchange rates and a fairly low GTP hydrolysis rate. Plays a role in control of the cell cycle, stress response, ribosome biogenesis and in those bacteria that undergo differentiation, in morphogenesis control. The chain is GTPase Obg from Rhodopseudomonas palustris (strain TIE-1).